Here is a 222-residue protein sequence, read N- to C-terminus: Protein-L-isoaspartate O-methyltransferase (222 aa).

Ser-65 is an active-site residue.

It belongs to the methyltransferase superfamily. L-isoaspartyl/D-aspartyl protein methyltransferase family.

It is found in the cytoplasm. The enzyme catalyses [protein]-L-isoaspartate + S-adenosyl-L-methionine = [protein]-L-isoaspartate alpha-methyl ester + S-adenosyl-L-homocysteine. Its function is as follows. Catalyzes the methyl esterification of L-isoaspartyl residues in peptides and proteins that result from spontaneous decomposition of normal L-aspartyl and L-asparaginyl residues. It plays a role in the repair and/or degradation of damaged proteins. In Chlorobium luteolum (strain DSM 273 / BCRC 81028 / 2530) (Pelodictyon luteolum), this protein is Protein-L-isoaspartate O-methyltransferase.